The following is a 65-amino-acid chain: Conotoxin tx3c (65 aa).

Positions Met-1 to Ala-19 are cleaved as a signal peptide. Residues Val-20–Ala-50 constitute a propeptide that is removed on maturation. Intrachain disulfides connect Cys-53–Cys-64, Cys-54–Cys-60, and Cys-57–Cys-63. Pro-62 is modified (4-hydroxyproline; partial). Residue Cys-64 is modified to Cysteine amide.

The hydroxylation at Pro-62 is observed in PubMed:15924437, PubMed:19380747 and PubMed:22709442, and the non-hydroxylation is described in PubMed:22709442. Expressed by the venom duct.

It is found in the secreted. Causes scratching in mice. This chain is Conotoxin tx3c, found in Conus textile (Cloth-of-gold cone).